We begin with the raw amino-acid sequence, 81 residues long: Photosystem I iron-sulfur center (81 aa).

4Fe-4S ferredoxin-type domains are found at residues Met1–Trp31 and Ile39–Tyr68. Residues Cys11, Cys14, Cys17, Cys21, Cys48, Cys51, Cys54, and Cys58 each coordinate [4Fe-4S] cluster.

In terms of assembly, the eukaryotic PSI reaction center is composed of at least 11 subunits. [4Fe-4S] cluster is required as a cofactor.

Its subcellular location is the plastid. It is found in the chloroplast thylakoid membrane. The catalysed reaction is reduced [plastocyanin] + hnu + oxidized [2Fe-2S]-[ferredoxin] = oxidized [plastocyanin] + reduced [2Fe-2S]-[ferredoxin]. In terms of biological role, apoprotein for the two 4Fe-4S centers FA and FB of photosystem I (PSI); essential for photochemical activity. FB is the terminal electron acceptor of PSI, donating electrons to ferredoxin. The C-terminus interacts with PsaA/B/D and helps assemble the protein into the PSI complex. Required for binding of PsaD and PsaE to PSI. PSI is a plastocyanin-ferredoxin oxidoreductase, converting photonic excitation into a charge separation, which transfers an electron from the donor P700 chlorophyll pair to the spectroscopically characterized acceptors A0, A1, FX, FA and FB in turn. In Welwitschia mirabilis (Tree tumbo), this protein is Photosystem I iron-sulfur center.